The primary structure comprises 2472 residues: Spectrin alpha chain, non-erythrocytic 1 (2472 aa).

Position 1 is an N-acetylmethionine (M1). 9 Spectrin repeats span residues 45–146 (RFQF…IKLL), 150–251 (KLVQ…QGKL), 256–358 (EVQR…ARLD), 361–465 (YRLQ…QYEQ), 468–570 (DLQL…AQLA), 574–676 (HLQQ…KLRE), 679–781 (QQQQ…QKLA), 785–888 (RLQQ…DLED), and 891–961 (QAQQ…QQVA). The residue at position 587 (S587) is a Phosphoserine. N6-acetyllysine is present on K637. An N6-acetyllysine modification is found at K803. Residues S924, S982, S999, S1029, S1031, and S1041 each carry the phosphoserine modification. Residues 967-1026 (TGKELVLALYDYQEKSPREVTMKKGDILTLLNSTNKDWWKVEVNDRQGFVPAAYVKKLDP) form the SH3 domain. The stretch at 1096–1166 (LFREANELQQ…LESEGLMAEE (71 aa)) is one Spectrin 10 repeat. The residue at position 1176 (Y1176) is a Phosphotyrosine. Phosphoserine occurs at positions 1190, 1207, 1217, 1291, 1306, 1323, and 1338. Residues 1233–1336 (HEVQRFHRDA…RADQRKAKLG (104 aa)) form a Spectrin 11 repeat. Spectrin repeat units follow at residues 1339–1441 (HDLQ…RMML) and 1446–1549 (ELQL…KLGE). K1519 carries the post-translational modification N6-acetyllysine. Phosphoserine occurs at positions 1550, 1557, 1578, 1615, and 1647. Spectrin repeat units lie at residues 1552 to 1656 (TLQQ…KLKE), 1659 to 1762 (KQQN…KLSE), 1764 to 1868 (HRLH…RLEE), 1871 to 1974 (EYQQ…KLDE), 1978 to 2081 (FLQF…KLLE), 2092 to 2194 (LFLT…LELQ), and 2206 to 2310 (LRQE…NLEQ). T2020 carries the phosphothreonine modification. An N6-acetyllysine modification is found at K2052. Position 2066 is a phosphothreonine (T2066). 3 consecutive EF-hand domains span residues 2323-2358 (EALK…LGYD), 2366-2401 (EPDP…RETE), and 2404-2439 (KSSE…EQAD). Residues D2336, D2338, S2340, R2342, E2347, D2379, N2381, D2383, H2385, and E2390 each contribute to the Ca(2+) site. Residue K2421 is modified to N6-acetyllysine.

This sequence belongs to the spectrin family. As to quaternary structure, like erythrocyte spectrin, the spectrin-like proteins are capable of forming dimers which can further associate to tetramers. Interacts (via C-terminal spectrin repeats) with TRPC4. Interacts with CALM and EMD. Interacts with isoform 1 of ACP1. Identified in a complex with ACTN4, CASK, IQGAP1, MAGI2, NPHS1 and SPTBN1. Interacts with SHANK3 (via ANK repeats). Interacts with CLN3; this interaction regulates the fodrin localization at the plasma membrane. Post-translationally, phosphorylation of Tyr-1176 decreases sensitivity to cleavage by calpain in vitro.

The protein localises to the cytoplasm. It localises to the cytoskeleton. It is found in the cell cortex. Functionally, fodrin, which seems to be involved in secretion, interacts with calmodulin in a calcium-dependent manner and is thus candidate for the calcium-dependent movement of the cytoskeleton at the membrane. The polypeptide is Spectrin alpha chain, non-erythrocytic 1 (Sptan1) (Mus musculus (Mouse)).